The primary structure comprises 258 residues: Imidazole glycerol phosphate synthase subunit HisF (258 aa).

Active-site residues include Asp11 and Asp130.

The protein belongs to the HisA/HisF family. As to quaternary structure, heterodimer of HisH and HisF.

It localises to the cytoplasm. It carries out the reaction 5-[(5-phospho-1-deoxy-D-ribulos-1-ylimino)methylamino]-1-(5-phospho-beta-D-ribosyl)imidazole-4-carboxamide + L-glutamine = D-erythro-1-(imidazol-4-yl)glycerol 3-phosphate + 5-amino-1-(5-phospho-beta-D-ribosyl)imidazole-4-carboxamide + L-glutamate + H(+). It participates in amino-acid biosynthesis; L-histidine biosynthesis; L-histidine from 5-phospho-alpha-D-ribose 1-diphosphate: step 5/9. Its function is as follows. IGPS catalyzes the conversion of PRFAR and glutamine to IGP, AICAR and glutamate. The HisF subunit catalyzes the cyclization activity that produces IGP and AICAR from PRFAR using the ammonia provided by the HisH subunit. This chain is Imidazole glycerol phosphate synthase subunit HisF, found in Lachnoclostridium phytofermentans (strain ATCC 700394 / DSM 18823 / ISDg) (Clostridium phytofermentans).